A 553-amino-acid polypeptide reads, in one-letter code: Arginine--tRNA ligase (553 aa).

The short motif at Ala-122–His-132 is the 'HIGH' region element.

Belongs to the class-I aminoacyl-tRNA synthetase family. In terms of assembly, monomer.

The protein localises to the cytoplasm. It carries out the reaction tRNA(Arg) + L-arginine + ATP = L-arginyl-tRNA(Arg) + AMP + diphosphate. The polypeptide is Arginine--tRNA ligase (Mesoplasma florum (strain ATCC 33453 / NBRC 100688 / NCTC 11704 / L1) (Acholeplasma florum)).